A 79-amino-acid polypeptide reads, in one-letter code: Major outer membrane lipoprotein Lpp 3 (79 aa).

An N-terminal signal peptide occupies residues 1–21; the sequence is MNRTNKLILGAVVLGSALLAG. Residue Cys-22 is the site of N-palmitoyl cysteine attachment. A lipid anchor (S-diacylglycerol cysteine) is attached at Cys-22. Repeats lie at residues 25 to 35 and 39 to 49; these read NAKIDQLSSDV and SAKVDQLSNDV. Residues 28–76 are a coiled coil; that stretch reads IDQLSSDVQTLSAKVDQLSNDVNAMRSDVQAAKDDAARANQRLDNKVLR. The residue at position 79 (Lys-79) is an N6-murein peptidoglycan lysine.

The protein belongs to the Lpp family. As to quaternary structure, homotrimer.

The protein resides in the cell outer membrane. Its subcellular location is the secreted. The protein localises to the cell wall. In terms of biological role, a highly abundant outer membrane lipoprotein that controls the distance between the inner and outer membranes. The only protein known to be covalently linked to the peptidoglycan network (PGN). Also non-covalently binds the PGN. The link between the cell outer membrane and PGN contributes to maintenance of the structural and functional integrity of the cell envelope, and maintains the correct distance between the PGN and the outer membrane. In Salmonella paratyphi A (strain ATCC 9150 / SARB42), this protein is Major outer membrane lipoprotein Lpp 3.